The chain runs to 543 residues: CTP synthase (543 aa).

Residues methionine 1–leucine 265 form an amidoligase domain region. A CTP-binding site is contributed by serine 13. Serine 13 provides a ligand contact to UTP. ATP is bound by residues serine 14–isoleucine 19 and aspartate 71. The Mg(2+) site is built by aspartate 71 and glutamate 139. CTP is bound by residues aspartate 146–glutamate 148, lysine 186–glutamine 191, and lysine 222. UTP is bound by residues lysine 186–glutamine 191 and lysine 222. The region spanning threonine 290–lysine 541 is the Glutamine amidotransferase type-1 domain. Glycine 351 contributes to the L-glutamine binding site. The active-site Nucleophile; for glutamine hydrolysis is the cysteine 378. Residues leucine 379–glutamine 382, glutamate 402, and arginine 469 contribute to the L-glutamine site. Catalysis depends on residues histidine 514 and glutamate 516.

It belongs to the CTP synthase family. Homotetramer.

It catalyses the reaction UTP + L-glutamine + ATP + H2O = CTP + L-glutamate + ADP + phosphate + 2 H(+). The enzyme catalyses L-glutamine + H2O = L-glutamate + NH4(+). It carries out the reaction UTP + NH4(+) + ATP = CTP + ADP + phosphate + 2 H(+). Its pathway is pyrimidine metabolism; CTP biosynthesis via de novo pathway; CTP from UDP: step 2/2. Allosterically activated by GTP, when glutamine is the substrate; GTP has no effect on the reaction when ammonia is the substrate. The allosteric effector GTP functions by stabilizing the protein conformation that binds the tetrahedral intermediate(s) formed during glutamine hydrolysis. Inhibited by the product CTP, via allosteric rather than competitive inhibition. Its function is as follows. Catalyzes the ATP-dependent amination of UTP to CTP with either L-glutamine or ammonia as the source of nitrogen. Regulates intracellular CTP levels through interactions with the four ribonucleotide triphosphates. This is CTP synthase from Pseudomonas fluorescens (strain Pf0-1).